The sequence spans 105 residues: Chloroacetanilide N-alkylformylase 1, ferredoxin component (105 aa).

Residues Pro2–Asp105 form the 2Fe-2S ferredoxin-type domain. Residues Cys40, Cys46, Cys49, and Cys86 each contribute to the [2Fe-2S] cluster site.

It belongs to the adrenodoxin/putidaredoxin family. The chloroacetanilide N-alkylformylase multicomponent enzyme system is composed of an oxygenase component (CndA) and an electron transfer component formed by a ferredoxin reductase (CndC1) and a ferredoxin (CndB1). In vitro, chloroacetanilide N-alkylformylase assays in which CndB1 is substituted for CndB2 demonstrate that the two enzymes possess nearly identical activities. [2Fe-2S] cluster is required as a cofactor.

Component of the chloroacetanilide N-alkylformylase multicomponent enzyme system involved in the degradation of chloroacetanilide herbicides (N-alkoxyalkyl-N-chloroacetyl-substituted aniline derivatives). In vitro, functions as an intermediate electron transfer protein. This is Chloroacetanilide N-alkylformylase 1, ferredoxin component from Rhizorhabdus wittichii (strain DC-6 / KACC 16600) (Sphingomonas wittichii).